A 271-amino-acid chain; its full sequence is MVLLKEYRVILPVSVDEYQVGQLYSVAEASKNETGGGEGVEVLVNEPYEKDDGEKGQYTHKIYHLQSKVPTFVRMLAPEGALNIHEKAWNAYPYCRTVITNEYMKEDFLIKIETWHKPDLGTQENVHKLEPEAWKHVEAIYIDIADRSQVLSKDYKAEEDPAKFKSIKTGRGPLGPNWKQELVNQKDCPYMCAYKLVTVKFKWWGLQNKVENFIHKQEKRLFTNFHRQLFCWLDKWVDLTMDDIRRMEEETKRQLDEMRQKDPVKGMTADD.

Residues T59, K61, E86, N90, T97, and K195 each contribute to the a 1,2-diacyl-sn-glycero-3-phospho-(1D-myo-inositol) site. N6-acetyllysine is present on K216. The span at 251–264 (TKRQLDEMRQKDPV) shows a compositional bias: basic and acidic residues. Positions 251–271 (TKRQLDEMRQKDPVKGMTADD) are disordered.

The protein belongs to the PtdIns transfer protein family. PI transfer class I subfamily. In terms of processing, phosphorylated by PKC in a calcium and phosphatidylserine-dependent manner. In terms of tissue distribution, expressed in a wide range of tissues.

Its subcellular location is the cytoplasm. The protein localises to the nucleus. It catalyses the reaction a 1,2-diacyl-sn-glycero-3-phosphocholine(in) = a 1,2-diacyl-sn-glycero-3-phosphocholine(out). The catalysed reaction is a 1,2-diacyl-sn-glycero-3-phospho-(1D-myo-inositol)(in) = a 1,2-diacyl-sn-glycero-3-phospho-(1D-myo-inositol)(out). With respect to regulation, phosphatidylinositol transfer activity is inhibited by N-ethylmaleimide. Catalyzes the transfer of phosphatidylinositol (PI) and phosphatidylcholine (PC) between membranes. Shows a preference for PI and PC containing shorter saturated or monosaturated acyl chains at the sn-1 and sn-2 positions. Preference order for PC is C16:1 &gt; C16:0 &gt; C18:1 &gt; C18:0 &gt; C20:4 and for PI is C16:1 &gt; C16:0 &gt; C18:1 &gt; C18:0 &gt; C20:4 &gt; C20:3. In Rattus norvegicus (Rat), this protein is Phosphatidylinositol transfer protein alpha isoform (Pitpna).